Reading from the N-terminus, the 491-residue chain is Probable glycine dehydrogenase (decarboxylating) subunit 2 (491 aa).

The residue at position 273 (Lys273) is an N6-(pyridoxal phosphate)lysine.

The protein belongs to the GcvP family. C-terminal subunit subfamily. In terms of assembly, the glycine cleavage system is composed of four proteins: P, T, L and H. In this organism, the P 'protein' is a heterodimer of two subunits. The cofactor is pyridoxal 5'-phosphate.

It catalyses the reaction N(6)-[(R)-lipoyl]-L-lysyl-[glycine-cleavage complex H protein] + glycine + H(+) = N(6)-[(R)-S(8)-aminomethyldihydrolipoyl]-L-lysyl-[glycine-cleavage complex H protein] + CO2. In terms of biological role, the glycine cleavage system catalyzes the degradation of glycine. The P protein binds the alpha-amino group of glycine through its pyridoxal phosphate cofactor; CO(2) is released and the remaining methylamine moiety is then transferred to the lipoamide cofactor of the H protein. This chain is Probable glycine dehydrogenase (decarboxylating) subunit 2, found in Bacillus cereus (strain ATCC 10987 / NRS 248).